Consider the following 1099-residue polypeptide: Inverted formin-2 (1099 aa).

Positions 1-330 (MSLTEGAHTK…RAVLLADDCQ (330 aa)) constitute a GBD/FH3 domain. 2 stretches are compositionally biased toward basic and acidic residues: residues 348-359 (SSKEKRKTDKCT) and 367-385 (QTDK…KKDP). Disordered stretches follow at residues 348-391 (SSKE…SGIP), 432-509 (PSPP…PTPP), and 1000-1019 (AEKR…KGEN). Positions 426–569 (TCSSVLPSPP…GMLPPPPPLP (144 aa)) constitute an FH1 domain. A compositionally biased stretch (pro residues) spans 452–499 (PLPPPPPPLPGTELSPPPPGMVALSLPPPPPPLPGMGGMLPPPPPPLP). An FH2 domain is found at 621–1009 (FLKVNKPTLK…AEKRKQQIAD (389 aa)). Positions 907 to 1019 (LKKLRDLQNK…EETKRQKGEN (113 aa)) form a coiled coil. In terms of domain architecture, WH2 spans 1037-1052 (DDLLADIKKGFQLRKT). The segment at 1064–1085 (KTLSSETNRTDIQHVGKRPEVP) is disordered. Over residues 1071–1083 (NRTDIQHVGKRPE) the composition is skewed to basic and acidic residues.

The protein belongs to the formin homology family.

This is Inverted formin-2 (inf2) from Xenopus laevis (African clawed frog).